Here is a 97-residue protein sequence, read N- to C-terminus: Co-chaperonin GroES (97 aa).

Belongs to the GroES chaperonin family. In terms of assembly, heptamer of 7 subunits arranged in a ring. Interacts with the chaperonin GroEL.

The protein localises to the cytoplasm. Together with the chaperonin GroEL, plays an essential role in assisting protein folding. The GroEL-GroES system forms a nano-cage that allows encapsulation of the non-native substrate proteins and provides a physical environment optimized to promote and accelerate protein folding. GroES binds to the apical surface of the GroEL ring, thereby capping the opening of the GroEL channel. The sequence is that of Co-chaperonin GroES from Buchnera aphidicola subsp. Geoica urticularia.